The chain runs to 209 residues: LexA repressor (209 aa).

The segment at residues 28-48 (RVELAKILGFRSANAAEEHLK) is a DNA-binding region (H-T-H motif). Residues serine 126 and lysine 163 each act as for autocatalytic cleavage activity in the active site.

The protein belongs to the peptidase S24 family. Homodimer.

It catalyses the reaction Hydrolysis of Ala-|-Gly bond in repressor LexA.. Functionally, represses a number of genes involved in the response to DNA damage (SOS response), including recA and lexA. In the presence of single-stranded DNA, RecA interacts with LexA causing an autocatalytic cleavage which disrupts the DNA-binding part of LexA, leading to derepression of the SOS regulon and eventually DNA repair. The polypeptide is LexA repressor (Psychromonas ingrahamii (strain DSM 17664 / CCUG 51855 / 37)).